The following is a 655-amino-acid chain: UvrABC system protein C (655 aa).

The region spanning 16–95 is the GIY-YIG domain; it reads TDPGVYRFRD…IKEFAPRYNL (80 aa). Residues 207 to 242 form the UVR domain; sequence KRFIGTLEKQMAEAVAELDYERAARLRDDVIALRKV.

The protein belongs to the UvrC family. In terms of assembly, interacts with UvrB in an incision complex.

The protein resides in the cytoplasm. Functionally, the UvrABC repair system catalyzes the recognition and processing of DNA lesions. UvrC both incises the 5' and 3' sides of the lesion. The N-terminal half is responsible for the 3' incision and the C-terminal half is responsible for the 5' incision. The sequence is that of UvrABC system protein C from Renibacterium salmoninarum (strain ATCC 33209 / DSM 20767 / JCM 11484 / NBRC 15589 / NCIMB 2235).